The primary structure comprises 91 residues: MNISKPQQRTLHALAQGGRIELERDDNGRIISADCLTRDGWALTDCTVAVFQSLKRKRLIASQDGGPYRITRLGLANLRAQLDNRVGAKAW.

The protein belongs to the UPF0386 family.

The chain is UPF0386 protein CC_0226 from Caulobacter vibrioides (strain ATCC 19089 / CIP 103742 / CB 15) (Caulobacter crescentus).